Here is a 283-residue protein sequence, read N- to C-terminus: Thymidylate synthase (283 aa).

Arginine 22 contributes to the dUMP binding site. Cysteine 160 (nucleophile) is an active-site residue. DUMP-binding positions include 180–183, asparagine 191, and 221–223; these read RSAD and HIY. Aspartate 183 is a binding site for (6R)-5,10-methylene-5,6,7,8-tetrahydrofolate. Serine 282 is a binding site for (6R)-5,10-methylene-5,6,7,8-tetrahydrofolate.

This sequence belongs to the thymidylate synthase family. Bacterial-type ThyA subfamily. In terms of assembly, homodimer.

The protein resides in the cytoplasm. It catalyses the reaction dUMP + (6R)-5,10-methylene-5,6,7,8-tetrahydrofolate = 7,8-dihydrofolate + dTMP. It functions in the pathway pyrimidine metabolism; dTTP biosynthesis. Catalyzes the reductive methylation of 2'-deoxyuridine-5'-monophosphate (dUMP) to 2'-deoxythymidine-5'-monophosphate (dTMP) while utilizing 5,10-methylenetetrahydrofolate (mTHF) as the methyl donor and reductant in the reaction, yielding dihydrofolate (DHF) as a by-product. This enzymatic reaction provides an intracellular de novo source of dTMP, an essential precursor for DNA biosynthesis. In Glaesserella parasuis serovar 5 (strain SH0165) (Haemophilus parasuis), this protein is Thymidylate synthase.